Consider the following 616-residue polypeptide: uncharacterized protein (616 aa).

The protein belongs to the UbiD family.

This is an uncharacterized protein from Helicobacter pylori (strain ATCC 700392 / 26695) (Campylobacter pylori).